Here is a 980-residue protein sequence, read N- to C-terminus: Probable outer membrane protein PmpH (980 aa).

The signal sequence occupies residues 1 to 24 (MPFSLRSTSFCFLACLCSYSYGLA). The Autotransporter domain occupies 661 to 980 (GELVPNSLWV…FVSLGLNRIF (320 aa)).

The protein belongs to the PMP outer membrane protein family.

It localises to the secreted. The protein resides in the cell wall. It is found in the cell outer membrane. The sequence is that of Probable outer membrane protein PmpH (pmpH) from Chlamydia muridarum (strain MoPn / Nigg).